The sequence spans 196 residues: MARSFYSHIKEAWEDPDDGKLAELQWQRKQDWRKEGAIERVDRPTRLDKARELGYKAKQGVVVVRVSVRKGTARKSRFKAGRRTKRQGVNRIGRAKNLQRIAEERASRKYVNLRTLNSYWVGEDGSQKWFEAILLDPEHGAIQNDDDLNWICDDSHKNRVFRGKTSAGRRARGLQNRGKGTEGLRPSTNADKRNKS.

Positions 162–172 (RGKTSAGRRAR) are enriched in basic residues. The disordered stretch occupies residues 162-196 (RGKTSAGRRARGLQNRGKGTEGLRPSTNADKRNKS).

This sequence belongs to the eukaryotic ribosomal protein eL15 family.

In Halobacterium salinarum (strain ATCC 29341 / DSM 671 / R1), this protein is Large ribosomal subunit protein eL15.